The sequence spans 247 residues: Large ribosomal subunit protein uL24m (247 aa).

Residues 84–117 (FFRGDRIEVLVGKDKGKQGIVTQVIPERNWVIVE) form the KOW domain.

This sequence belongs to the universal ribosomal protein uL24 family. As to quaternary structure, component of the mitochondrial ribosome large subunit (39S) which comprises a 16S rRNA and about 50 distinct proteins.

The protein localises to the mitochondrion. In Drosophila melanogaster (Fruit fly), this protein is Large ribosomal subunit protein uL24m (mRpL24).